Here is a 217-residue protein sequence, read N- to C-terminus: Large ribosomal subunit protein uL3 (217 aa).

The disordered stretch occupies residues 129–161 (SRGPMSHGSKNHRAPGSTGAGTTPGRIYPGKRM). The span at 142–153 (APGSTGAGTTPG) shows a compositional bias: low complexity.

The protein belongs to the universal ribosomal protein uL3 family. In terms of assembly, part of the 50S ribosomal subunit. Forms a cluster with proteins L14 and L19.

Its function is as follows. One of the primary rRNA binding proteins, it binds directly near the 3'-end of the 23S rRNA, where it nucleates assembly of the 50S subunit. The sequence is that of Large ribosomal subunit protein uL3 from Prochlorococcus marinus (strain MIT 9515).